The sequence spans 568 residues: MAGUK p55 subfamily member 3 (568 aa).

2 consecutive L27 domains span residues 6 to 60 and 61 to 118; these read EDSG…ERQS and PTPV…FDPV. In terms of domain architecture, PDZ spans 137 to 218; that stretch reads IVRLVKNKEP…SITLKIIPAT (82 aa). An SH3 domain is found at 226–296; the sequence is DSKVFMRALF…PSKQFQERRL (71 aa). Position 307 is a phosphoserine (Ser307). In terms of domain architecture, Guanylate kinase-like spans 385-568; sequence PRLVVLIGSL…QEPAASSELS (184 aa).

This sequence belongs to the MAGUK family. In terms of assembly, interacts with HTR2C; this interaction stabilizes the receptor at the plasma membrane and prevents the desensitization of the HTR2C receptor-mediated calcium response. Interacts with HTR2A. Interacts with HTR4. Interacts (via PDZ domain) with CADM1 (via C-terminus)Interacts (via PDZ domain) with CADM1; this interaction connects CADM1 with DLG1. Interacts (via Guanylate kinase-like domain) with PALS1. Interacts with DLG1 (via N-terminus); this interaction connects CADM1 with DLG1 and links CADM1 with the regulatory subunit of phosphoinositide-3-kinase (PI3K) by forming a multiprotein complex and participates in cell spreading. In terms of tissue distribution, expressed in brain, skeletal muscle, testis, kidney, and lung.

Its subcellular location is the apical cell membrane. The protein localises to the cell membrane. It localises to the cell junction. It is found in the adherens junction. Participates in cell spreading through the phosphoinositide-3-kinase (PI3K) pathway by connecting CADM1 to DLG1 and the regulatory subunit of phosphoinositide-3-kinase (PI3K). Stabilizes HTR2C at the plasma membrane and prevents its desensitization. May participates in the maintenance of adherens junctions. The protein is MAGUK p55 subfamily member 3 of Mus musculus (Mouse).